Reading from the N-terminus, the 146-residue chain is Cyanate hydratase (146 aa).

Active-site residues include arginine 87, glutamate 90, and serine 113.

The protein belongs to the cyanase family.

The catalysed reaction is cyanate + hydrogencarbonate + 3 H(+) = NH4(+) + 2 CO2. Its function is as follows. Catalyzes the reaction of cyanate with bicarbonate to produce ammonia and carbon dioxide. This is Cyanate hydratase from Nostoc sp. (strain PCC 7120 / SAG 25.82 / UTEX 2576).